A 2542-amino-acid polypeptide reads, in one-letter code: Highly reducing polyketide synthase (2542 aa).

A Ketosynthase family 3 (KS3) domain is found at 7–435; the sequence is PEPIAIVGMA…GANAHAILDA (429 aa). Catalysis depends on for beta-ketoacyl synthase activity residues cysteine 182, histidine 317, and histidine 357. Residues 545–872 enclose the Malonyl-CoA:ACP transacylase (MAT) domain; it reads FVFTGQGAQW…NLVGSLFLSG (328 aa). The N-terminal hotdog fold stretch occupies residues 927–1062; that stretch reads HDLLGSRIPG…TTNETLRINS (136 aa). Positions 927–1224 constitute a PKS/mFAS DH domain; sequence HDLLGSRIPG…FLSLETATKE (298 aa). Histidine 959 functions as the Proton acceptor; for dehydratase activity in the catalytic mechanism. Residues 1072 to 1224 form a C-terminal hotdog fold region; sequence NKDSYVRRWY…FLSLETATKE (153 aa). Aspartate 1137 (proton donor; for dehydratase activity) is an active-site residue. A methyltransferase (CMet) domain region spans residues 1275–1574; that stretch reads LTQLAIRSVV…AGADIMLDDY (300 aa). A disordered region spans residues 1606–1634; sequence VNGTNGINSTNSVNVTNDTSGINDTNRMN. An Enoyl reductase (ER) domain is found at 1866–2186; sequence GKANSFYFES…QGDSVGSVVL (321 aa). The Ketoreductase (KR) domain maps to 2209-2389; the sequence is ASYLLVGCLG…QAMSMALGMI (181 aa).

Pantetheine 4'-phosphate serves as cofactor.

The protein operates within antifungal biosynthesis. Its function is as follows. Highly reducing polyketide synthase; part of the gene cluster that mediates the biosynthesis of the tetrahydropyranyl antifungal agent lanomycin that acts as an inhibitor of CYP51 and blocks the ergosterol biosynthesis. The biosynthesis probably begins with the formation of an hexaketide, followed by methionine mediated alkylation of C-2 and C-6, and methylation of the reduced C-3 oxygen, pyran forming reductive ring closure, oxygenation of C-4, beta-keto reduction, enoyl reduction and dehydration of the remaining oxygens, and finally, acylation with glycine to complete the biosynthesis. The protein is Highly reducing polyketide synthase of Pyrenophora dematioidea (Helminthosporium dematioideum).